A 175-amino-acid chain; its full sequence is MTALPIRGPVRIIGIDPGLRRTGWGVIEAEGNRLIYVACGSVEPPDDLPLSSRLLAIHEGLASVLSDHKPMEAAVEQTFVNKDGVATLKLGQARGVAMLAPAMFGISVAEYAPNQVKKTVVGAGHADKQQIAMMLKILLPKAEPPSADAADALAIAITHAHHRQSTALRLKVVGV.

Residues D16, E76, and D148 contribute to the active site. Mg(2+)-binding residues include D16, E76, and D148.

This sequence belongs to the RuvC family. Homodimer which binds Holliday junction (HJ) DNA. The HJ becomes 2-fold symmetrical on binding to RuvC with unstacked arms; it has a different conformation from HJ DNA in complex with RuvA. In the full resolvosome a probable DNA-RuvA(4)-RuvB(12)-RuvC(2) complex forms which resolves the HJ. It depends on Mg(2+) as a cofactor.

The protein localises to the cytoplasm. The enzyme catalyses Endonucleolytic cleavage at a junction such as a reciprocal single-stranded crossover between two homologous DNA duplexes (Holliday junction).. Functionally, the RuvA-RuvB-RuvC complex processes Holliday junction (HJ) DNA during genetic recombination and DNA repair. Endonuclease that resolves HJ intermediates. Cleaves cruciform DNA by making single-stranded nicks across the HJ at symmetrical positions within the homologous arms, yielding a 5'-phosphate and a 3'-hydroxyl group; requires a central core of homology in the junction. The consensus cleavage sequence is 5'-(A/T)TT(C/G)-3'. Cleavage occurs on the 3'-side of the TT dinucleotide at the point of strand exchange. HJ branch migration catalyzed by RuvA-RuvB allows RuvC to scan DNA until it finds its consensus sequence, where it cleaves and resolves the cruciform DNA. This chain is Crossover junction endodeoxyribonuclease RuvC, found in Bradyrhizobium diazoefficiens (strain JCM 10833 / BCRC 13528 / IAM 13628 / NBRC 14792 / USDA 110).